A 536-amino-acid chain; its full sequence is Bicoumarin synthase desC (536 aa).

Residues 12–32 (YVALAGITGFFLVFLGFLVVI) traverse the membrane as a helical segment. Asn-149 and Asn-371 each carry an N-linked (GlcNAc...) asparagine glycan. Cys-480 lines the heme pocket.

This sequence belongs to the cytochrome P450 family. Heme serves as cofactor.

The protein resides in the membrane. It catalyses the reaction 2 7-demethylsiderin + NADPH + O2 = desertorin A + NADP(+) + 2 H2O. It participates in secondary metabolite biosynthesis. Functionally, non-reducing polyketide synthase; part of the gene cluster that mediates the biosynthesis of the bicoumarin desertorin. The non-reducing polyketide synthase desS first catalyzes the formation of the pentaketidic 4,7-dihydroxy-5-methylcoumarin from acetyl coenzyme A and 4 malonyl coenzyme A molecules. Further O-methylation by desB leads to the formation of 7-demethylsiderin. Then, an oxidative phenol coupling catalyzed by the cytochrome P450 monooxygenase desC forms the 6,8'-dimer M-desertorin A via dimerization the monomeric precursor, 7-demethylsiderin. M-desertorin A is further converted to M-desertorin C. The chain is Bicoumarin synthase desC from Aspergillus desertorum (Emericella desertorum).